The following is a 470-amino-acid chain: MTELPDNTRWQLWIVALGFFMQSLDTTIVNTALPSMAKSLGESPLHMHMVVVSYVLTVAVMLPASGWLADKIGVRNIFFAAIVLFTLGSLFCALSGTLNQLVLARVLQGVGGAMMVPVGRLTVMKIVPRAQYMAAMTFVTLPGQIGPLLGPALGGVLVEYASWHWIFLINIPVGIVGAMATFMLMPNYTIETRRFDLPGFLLLAIGMAVLTLALDGSKSMGISPWTLAGLAAGGAAAILLYLLHAKKNSGALFSLRLFRTPTFSLGLLGSFAGRIGSGMLPFMTPVFLQIGLGFSPFHAGLMMIPMVLGSMGMKRIVVQIVNRFGYRRVLVATTLGLALVSLLFMSVALLGWYYLLPLVLLLQGMVNSARFSSMNTLTLKDLPDTLASSGNSLLSMIMQLSMSIGVTIAGMLLGMFGQQHIGIDSSATHHVFMYTWLCMAVIIALPAIIFARVPNDTQQNMVISRRKRSL.

The Periplasmic segment spans residues 1–11; the sequence is MTELPDNTRWQ. Residues 12–32 form a helical membrane-spanning segment; it reads LWIVALGFFMQSLDTTIVNTA. Topologically, residues 33 to 48 are cytoplasmic; that stretch reads LPSMAKSLGESPLHMH. The helical transmembrane segment at 49–69 threads the bilayer; it reads MVVVSYVLTVAVMLPASGWLA. Residues 70 to 76 lie on the Periplasmic side of the membrane; it reads DKIGVRN. Residues 77 to 97 form a helical membrane-spanning segment; that stretch reads IFFAAIVLFTLGSLFCALSGT. Topologically, residues 98–101 are cytoplasmic; that stretch reads LNQL. Residues 102-124 form a helical membrane-spanning segment; it reads VLARVLQGVGGAMMVPVGRLTVM. Residues 125–137 are Periplasmic-facing; it reads KIVPRAQYMAAMT. Residues 138-158 form a helical membrane-spanning segment; sequence FVTLPGQIGPLLGPALGGVLV. Topologically, residues 159–164 are cytoplasmic; sequence EYASWH. The chain crosses the membrane as a helical span at residues 165-185; it reads WIFLINIPVGIVGAMATFMLM. At 186-196 the chain is on the periplasmic side; that stretch reads PNYTIETRRFD. Residues 197 to 217 traverse the membrane as a helical segment; that stretch reads LPGFLLLAIGMAVLTLALDGS. Topologically, residues 218 to 221 are cytoplasmic; it reads KSMG. The chain crosses the membrane as a helical span at residues 222–242; sequence ISPWTLAGLAAGGAAAILLYL. Residues 243-262 are Periplasmic-facing; that stretch reads LHAKKNSGALFSLRLFRTPT. A helical transmembrane segment spans residues 263-283; that stretch reads FSLGLLGSFAGRIGSGMLPFM. The Cytoplasmic portion of the chain corresponds to 284–285; it reads TP. Residues 286–306 traverse the membrane as a helical segment; that stretch reads VFLQIGLGFSPFHAGLMMIPM. Topologically, residues 307-341 are periplasmic; the sequence is VLGSMGMKRIVVQIVNRFGYRRVLVATTLGLALVS. The helical transmembrane segment at 342-362 threads the bilayer; sequence LLFMSVALLGWYYLLPLVLLL. Residues 363–395 are Cytoplasmic-facing; it reads QGMVNSARFSSMNTLTLKDLPDTLASSGNSLLS. Residues 396–416 traverse the membrane as a helical segment; the sequence is MIMQLSMSIGVTIAGMLLGMF. The Periplasmic portion of the chain corresponds to 417-430; the sequence is GQQHIGIDSSATHH. A helical transmembrane segment spans residues 431 to 451; it reads VFMYTWLCMAVIIALPAIIFA. Over 452 to 470 the chain is Cytoplasmic; that stretch reads RVPNDTQQNMVISRRKRSL.

This sequence belongs to the major facilitator superfamily. TCR/Tet family.

Its subcellular location is the cell inner membrane. The protein is Putative multidrug resistance protein MdtD of Salmonella heidelberg (strain SL476).